Reading from the N-terminus, the 479-residue chain is Replication factor C large subunit (479 aa).

ATP is bound at residue G56–T63. Residues L435–K461 are compositionally biased toward basic and acidic residues. Residues L435–Q479 are disordered.

Belongs to the activator 1 small subunits family. RfcL subfamily. In terms of assembly, heteromultimer composed of small subunits (RfcS) and large subunits (RfcL).

Its function is as follows. Part of the RFC clamp loader complex which loads the PCNA sliding clamp onto DNA. The chain is Replication factor C large subunit from Aeropyrum pernix (strain ATCC 700893 / DSM 11879 / JCM 9820 / NBRC 100138 / K1).